Consider the following 312-residue polypeptide: Ribosomal RNA small subunit methyltransferase H (312 aa).

S-adenosyl-L-methionine is bound by residues 33-35 (AGH), Asp53, Phe79, Asp100, and Gln107.

Belongs to the methyltransferase superfamily. RsmH family.

It localises to the cytoplasm. The catalysed reaction is cytidine(1402) in 16S rRNA + S-adenosyl-L-methionine = N(4)-methylcytidine(1402) in 16S rRNA + S-adenosyl-L-homocysteine + H(+). Its function is as follows. Specifically methylates the N4 position of cytidine in position 1402 (C1402) of 16S rRNA. This chain is Ribosomal RNA small subunit methyltransferase H, found in Clostridium acetobutylicum (strain ATCC 824 / DSM 792 / JCM 1419 / IAM 19013 / LMG 5710 / NBRC 13948 / NRRL B-527 / VKM B-1787 / 2291 / W).